The primary structure comprises 443 residues: Probable D-serine dehydratase (443 aa).

Lys116 is subject to N6-(pyridoxal phosphate)lysine.

The protein belongs to the serine/threonine dehydratase family. DsdA subfamily. The cofactor is pyridoxal 5'-phosphate.

It catalyses the reaction D-serine = pyruvate + NH4(+). The polypeptide is Probable D-serine dehydratase (Bacillus cereus (strain ATCC 14579 / DSM 31 / CCUG 7414 / JCM 2152 / NBRC 15305 / NCIMB 9373 / NCTC 2599 / NRRL B-3711)).